The chain runs to 261 residues: Cytochrome c oxidase subunit 3 (261 aa).

The Mitochondrial matrix portion of the chain corresponds to 1 to 15 (MTHQTHAYHMVNPSP). The helical transmembrane segment at 16 to 34 (WPLTGALSALLMTSGLAMW) threads the bilayer. At 35–40 (FHFNST) the chain is on the mitochondrial intermembrane side. A helical transmembrane segment spans residues 41-66 (ILLMIGLTTNTLTMYQWWRDVIREST). The Mitochondrial matrix segment spans residues 67-72 (FQGHHT). A helical transmembrane segment spans residues 73–105 (PTVQKGLRYGMILFIISEVLFFTGFFWAFYHSS). Residues 106 to 128 (LAPTPELGGCWPPTGIHPLNPLE) are Mitochondrial intermembrane-facing. Residues 129 to 152 (VPLLNTSVLLASGVSITWAHHSLM) traverse the membrane as a helical segment. The Mitochondrial matrix segment spans residues 153–155 (EGN). The chain crosses the membrane as a helical span at residues 156-183 (RYPMLQALFITIALGVYFTLLQASEYYE). Over 184 to 190 (APFTISD) the chain is Mitochondrial intermembrane. The helical transmembrane segment at 191-223 (GVYGSTFFVATGFHGLHVIIGSTFLIVCFFRQL) threads the bilayer. Residues 224-232 (KFHFTSNHH) lie on the Mitochondrial matrix side of the membrane. Residues 233–256 (FGFEAAAWYWHFVDVVWLFLYVSI) traverse the membrane as a helical segment. At 257 to 261 (YWWGS) the chain is on the mitochondrial intermembrane side.

This sequence belongs to the cytochrome c oxidase subunit 3 family. As to quaternary structure, component of the cytochrome c oxidase (complex IV, CIV), a multisubunit enzyme composed of 14 subunits. The complex is composed of a catalytic core of 3 subunits MT-CO1, MT-CO2 and MT-CO3, encoded in the mitochondrial DNA, and 11 supernumerary subunits COX4I, COX5A, COX5B, COX6A, COX6B, COX6C, COX7A, COX7B, COX7C, COX8 and NDUFA4, which are encoded in the nuclear genome. The complex exists as a monomer or a dimer and forms supercomplexes (SCs) in the inner mitochondrial membrane with NADH-ubiquinone oxidoreductase (complex I, CI) and ubiquinol-cytochrome c oxidoreductase (cytochrome b-c1 complex, complex III, CIII), resulting in different assemblies (supercomplex SCI(1)III(2)IV(1) and megacomplex MCI(2)III(2)IV(2)).

It localises to the mitochondrion inner membrane. The enzyme catalyses 4 Fe(II)-[cytochrome c] + O2 + 8 H(+)(in) = 4 Fe(III)-[cytochrome c] + 2 H2O + 4 H(+)(out). Its function is as follows. Component of the cytochrome c oxidase, the last enzyme in the mitochondrial electron transport chain which drives oxidative phosphorylation. The respiratory chain contains 3 multisubunit complexes succinate dehydrogenase (complex II, CII), ubiquinol-cytochrome c oxidoreductase (cytochrome b-c1 complex, complex III, CIII) and cytochrome c oxidase (complex IV, CIV), that cooperate to transfer electrons derived from NADH and succinate to molecular oxygen, creating an electrochemical gradient over the inner membrane that drives transmembrane transport and the ATP synthase. Cytochrome c oxidase is the component of the respiratory chain that catalyzes the reduction of oxygen to water. Electrons originating from reduced cytochrome c in the intermembrane space (IMS) are transferred via the dinuclear copper A center (CU(A)) of subunit 2 and heme A of subunit 1 to the active site in subunit 1, a binuclear center (BNC) formed by heme A3 and copper B (CU(B)). The BNC reduces molecular oxygen to 2 water molecules using 4 electrons from cytochrome c in the IMS and 4 protons from the mitochondrial matrix. The polypeptide is Cytochrome c oxidase subunit 3 (MT-CO3) (Raphicerus campestris (Steenbok)).